A 255-amino-acid chain; its full sequence is ATP synthase subunit a (255 aa).

Transmembrane regions (helical) follow at residues 40–60, 109–129, 135–155, 163–183, 196–218, and 230–250; these read TEPI…ASEV, LIGG…IPGV, NLNI…YYGL, VAHL…IEVI, LMLN…ALFV, and IVVQ…LATE.

Belongs to the ATPase A chain family. In terms of assembly, F-type ATPases have 2 components, CF(1) - the catalytic core - and CF(0) - the membrane proton channel. CF(1) has five subunits: alpha(3), beta(3), gamma(1), delta(1), epsilon(1). CF(0) has three main subunits: a(1), b(2) and c(9-12). The alpha and beta chains form an alternating ring which encloses part of the gamma chain. CF(1) is attached to CF(0) by a central stalk formed by the gamma and epsilon chains, while a peripheral stalk is formed by the delta and b chains.

It localises to the cell inner membrane. Key component of the proton channel; it plays a direct role in the translocation of protons across the membrane. The chain is ATP synthase subunit a from Sorangium cellulosum (strain So ce56) (Polyangium cellulosum (strain So ce56)).